Reading from the N-terminus, the 481-residue chain is Long chain base biosynthesis protein 1b (481 aa).

A helical membrane pass occupies residues 32 to 52 (FGIHIDGHLVVEGLLIAAILF).

The protein belongs to the class-II pyridoxal-phosphate-dependent aminotransferase family. Heterodimer with LCB2. Component of the serine palmitoyltransferase (SPT) complex, composed of LCB1 and LCB2. Pyridoxal 5'-phosphate is required as a cofactor.

The protein resides in the endoplasmic reticulum membrane. It catalyses the reaction L-serine + hexadecanoyl-CoA + H(+) = 3-oxosphinganine + CO2 + CoA. Its pathway is lipid metabolism; sphingolipid metabolism. Its function is as follows. Serine palmitoyltransferase (SPT). The heterodimer formed with LCB2 constitutes the catalytic core. In Oryza sativa subsp. japonica (Rice), this protein is Long chain base biosynthesis protein 1b.